The sequence spans 501 residues: UPF0288 protein Maeo_0995 (501 aa).

The protein belongs to the UPF0288 family.

The polypeptide is UPF0288 protein Maeo_0995 (Methanococcus aeolicus (strain ATCC BAA-1280 / DSM 17508 / OCM 812 / Nankai-3)).